The chain runs to 316 residues: uncharacterized protein (316 aa).

The HTH lacI-type domain maps to Met-1–Gln-56. The H-T-H motif DNA-binding region spans Leu-4 to Asn-23.

This is an uncharacterized protein from Bacillus subtilis (strain 168).